Here is a 123-residue protein sequence, read N- to C-terminus: Large ribosomal subunit protein uL14 (123 aa).

This sequence belongs to the universal ribosomal protein uL14 family. As to quaternary structure, part of the 50S ribosomal subunit. Forms a cluster with proteins L3 and L19. In the 70S ribosome, L14 and L19 interact and together make contacts with the 16S rRNA in bridges B5 and B8.

Binds to 23S rRNA. Forms part of two intersubunit bridges in the 70S ribosome. This chain is Large ribosomal subunit protein uL14, found in Corynebacterium jeikeium (strain K411).